The following is a 626-amino-acid chain: tRNA uridine 5-carboxymethylaminomethyl modification enzyme MnmG (626 aa).

13–18 is a binding site for FAD; it reads GGGHAG. 273–287 is a binding site for NAD(+); it reads GPRYCPSIEDKIHRF.

Belongs to the MnmG family. In terms of assembly, homodimer. Heterotetramer of two MnmE and two MnmG subunits. It depends on FAD as a cofactor.

The protein localises to the cytoplasm. NAD-binding protein involved in the addition of a carboxymethylaminomethyl (cmnm) group at the wobble position (U34) of certain tRNAs, forming tRNA-cmnm(5)s(2)U34. This Acinetobacter baumannii (strain AYE) protein is tRNA uridine 5-carboxymethylaminomethyl modification enzyme MnmG.